The primary structure comprises 316 residues: Beta-ketoacyl-[acyl-carrier-protein] synthase III (316 aa).

Residues cysteine 112 and histidine 243 contribute to the active site. Residues 244 to 248 are ACP-binding; the sequence is QANLR. Asparagine 273 is a catalytic residue.

It belongs to the thiolase-like superfamily. FabH family. As to quaternary structure, homodimer.

Its subcellular location is the cytoplasm. The enzyme catalyses malonyl-[ACP] + acetyl-CoA + H(+) = 3-oxobutanoyl-[ACP] + CO2 + CoA. The protein operates within lipid metabolism; fatty acid biosynthesis. Functionally, catalyzes the condensation reaction of fatty acid synthesis by the addition to an acyl acceptor of two carbons from malonyl-ACP. Catalyzes the first condensation reaction which initiates fatty acid synthesis and may therefore play a role in governing the total rate of fatty acid production. Possesses both acetoacetyl-ACP synthase and acetyl transacylase activities. Its substrate specificity determines the biosynthesis of branched-chain and/or straight-chain of fatty acids. The sequence is that of Beta-ketoacyl-[acyl-carrier-protein] synthase III from Histophilus somni (strain 129Pt) (Haemophilus somnus).